A 140-amino-acid chain; its full sequence is Desampylase (140 aa).

The MPN domain occupies 13-133 (TLIIPQHYLR…WILSEKNKIS (121 aa)). The active-site Proton donor/acceptor is glutamate 34. Zn(2+) is bound by residues histidine 88, histidine 90, and aspartate 101. Positions 88–101 (HSHIACPPIPSGKD) match the JAMM motif motif.

Belongs to the peptidase M67B family. In terms of assembly, exists in two major states: monomer and homodimer. Both conformational states are catalytically active. Zn(2+) is required as a cofactor. In terms of processing, the disulfide bridge probably stabilizes the PfJAMM1 homodimer at the optimal growth temperature of the hyperthermophile.

It catalyses the reaction an N(6)-[small archaeal modifier protein]-[protein]-L-lysine + H2O = a [protein]-L-lysine + a [small archaeal modifier protein].. Its activity is regulated as follows. Inhibited by EDTA in vitro. In terms of biological role, metalloprotease that displays desampylase (DSAMP) activity, cleaving ubiquitin-like small archaeal modifier proteins (SAMP1, SAMP2 and SAMP3) from protein conjugates (isopeptide- and linear-linked). Thus, likely regulates sampylation and the pools of 'free' SAMP available for protein modification. In vitro, is also able to cleave non-physiological ubiquitin (Ub) substrates, such as 'Met1-', 'Lys48-', and 'Lys63'-linked Ub dimers (Ub2), and to remove Ub tags from diverse proteins. In Pyrococcus furiosus (strain ATCC 43587 / DSM 3638 / JCM 8422 / Vc1), this protein is Desampylase.